The following is a 547-amino-acid chain: RING finger protein ETP1 homolog (547 aa).

The RING-type zinc finger occupies 208-248; that stretch reads CVVCLERMDSSITGLITIVCQHTFHCPCLQKWGNSSCPVCR. The segment at 245–338 adopts a UBP-type; degenerate zinc-finger fold; sequence PVCRYTQKVQ…GKLVELSTDG (94 aa). C262, C265, C274, C277, C282, H289, H293, and H299 together coordinate Zn(2+). Polar residues predominate over residues 514-523; sequence LPNNSTVRSN. Residues 514–547 are disordered; sequence LPNNSTVRSNSVKSKKKKKKKPVVPSSSGSLGTD. Over residues 526-535 the composition is skewed to basic residues; the sequence is KSKKKKKKKP.

The protein localises to the cytoplasm. In terms of biological role, may act as a cytoplasmic retention protein with a role in regulating nuclear transport. This Schizosaccharomyces pombe (strain 972 / ATCC 24843) (Fission yeast) protein is RING finger protein ETP1 homolog.